A 97-amino-acid chain; its full sequence is Putative membrane protein insertion efficiency factor (97 aa).

This sequence belongs to the UPF0161 family.

The protein localises to the cell inner membrane. Its function is as follows. Could be involved in insertion of integral membrane proteins into the membrane. This Chlamydia muridarum (strain MoPn / Nigg) protein is Putative membrane protein insertion efficiency factor.